The following is a 585-amino-acid chain: Protein DENND6B (585 aa).

Residues 1–10 are compositionally biased toward low complexity; it reads MEVPVGPGPR. A disordered region spans residues 1 to 25; sequence MEVPVGPGPRQAGGGLGATRSSSSG. Residues 43-221 form the uDENN domain; it reads ECVCVVTFDL…IQVRIPSRVD (179 aa). Residues 246–373 form the cDENN domain; the sequence is VHELDLFRCF…VKLKKPSRLK (128 aa). Residues 375–499 enclose the dDENN domain; sequence LDTKPGLYTS…KSPHFDGWYR (125 aa).

This sequence belongs to the DENND6 family.

It localises to the recycling endosome. Its subcellular location is the cytoplasm. In terms of biological role, guanine nucleotide exchange factor (GEF) for RAB14. Also has some, lesser GEF activity towards RAB35. This is Protein DENND6B (Dennd6b) from Mus musculus (Mouse).